We begin with the raw amino-acid sequence, 352 residues long: Peptide chain release factor 1 (352 aa).

Glutamine 233 is subject to N5-methylglutamine. Positions 288 to 309 (NAKDRKEQVGSGDRSERIRTYN) are disordered. Residues 289 to 306 (AKDRKEQVGSGDRSERIR) show a composition bias toward basic and acidic residues.

The protein belongs to the prokaryotic/mitochondrial release factor family. In terms of processing, methylated by PrmC. Methylation increases the termination efficiency of RF1.

The protein localises to the cytoplasm. Its function is as follows. Peptide chain release factor 1 directs the termination of translation in response to the peptide chain termination codons UAG and UAA. In Helicobacter pylori (strain ATCC 700392 / 26695) (Campylobacter pylori), this protein is Peptide chain release factor 1 (prfA).